We begin with the raw amino-acid sequence, 775 residues long: MRSMRSGRDNNICFLGFLSFALISLPSLSLALTNPDDVAAINSLFLALESPLLPGWVASGGDPCGESWQGVLCNASQVETIILISANLGGELGVGLNMFTSLKAMDFSNNHIGGSIPSTLPVSLQNLFLSGNNFTGTIPESLSSLKSLSVMSLNNNLLSGKIPDVFQDLGLMINIDLSSNNLSGPLPPSMQNLSTLTSLLLQNNHLSGELDVLQDLPLKDLNVENNLFNGPIPEKLLSIPNFIKGGNLFNVTIAPSPSPETPPSPTSPKRPFFGPPSPNASAGHGQAHVRSPPSDHHPSRPTPQGKEDSFTSKRIIWISILGAFSFVVLALVCLLCGRKCLRKREDSEQLSKPHLTSEYGRAREGSRSNASMLPPSNTFNKDKEARPKERVGGASKLHGGAERSVGSESKQESHEIDMNGNAMDLMHPSSIPPIKRVIAKATEPAEASLKRTTSKSHGPLTAVKHFTVASLQQHTNSFSHENLIGTGMLGSVYRAELPGGKLFAVRKLDKKSPNHEEEGKFLELVNNIDRIRHANIVQLVGFCSEHSQRLLIHEYCRNGTLHDLLHIDDRLKIELSWNVRVRIALEAAKALEYLHEICDPPSIHRNFKSANILLDDDIRVHVSDCGLAPLISSGAVSQLSGQLLAAYGYGAPEFEYGIYTMKCDVYSFGVVMLELLTGRKSYDKKRDRGEQFLVRWAIPQLHDIDALAKMVDPSLKGDYPAKSLSHFADVISRCVQSEPEYRPLMSEVVQDLSDMIQREHRRNDSNGDNQYTGRR.

A signal peptide spans 1–31; sequence MRSMRSGRDNNICFLGFLSFALISLPSLSLA. Residues 32 to 314 lie on the Extracellular side of the membrane; it reads LTNPDDVAAI…GKEDSFTSKR (283 aa). 6 LRR repeats span residues 101–122, 123–146, 147–169, 171–193, 195–217, and 218–238; these read SLKA…TLPV, SLQN…SSLK, SLSV…FQDL, LMIN…MQNL, TLTS…QDLP, and LKDL…KLLS. An N-linked (GlcNAc...) asparagine glycan is attached at Asn-133. N-linked (GlcNAc...) asparagine glycans are attached at residues Asn-181 and Asn-192. Residue Asn-250 is glycosylated (N-linked (GlcNAc...) asparagine). Residues 254–308 form a disordered region; the sequence is APSPSPETPPSPTSPKRPFFGPPSPNASAGHGQAHVRSPPSDHHPSRPTPQGKED. Residues 256–278 show a composition bias toward pro residues; sequence SPSPETPPSPTSPKRPFFGPPSP. Asn-279 carries an N-linked (GlcNAc...) asparagine glycan. A helical membrane pass occupies residues 315-335; it reads IIWISILGAFSFVVLALVCLL. The Cytoplasmic portion of the chain corresponds to 336-775; that stretch reads CGRKCLRKRE…NGDNQYTGRR (440 aa). Residues 345–414 form a disordered region; sequence EDSEQLSKPH…VGSESKQESH (70 aa). A compositionally biased stretch (polar residues) spans 367-379; that stretch reads RSNASMLPPSNTF. Positions 380–391 are enriched in basic and acidic residues; that stretch reads NKDKEARPKERV. Positions 478–756 constitute a Protein kinase domain; that stretch reads FSHENLIGTG…EVVQDLSDMI (279 aa).

The protein belongs to the protein kinase superfamily. Ser/Thr protein kinase family. As to expression, expressed in roots, stems, leaves and flowers. Low expression in seedlings and siliques.

It is found in the membrane. Not essential for epidermal patterning and not redundant with STRUBBELIG. The chain is Protein STRUBBELIG-RECEPTOR FAMILY 1 (SRF1) from Arabidopsis thaliana (Mouse-ear cress).